A 131-amino-acid polypeptide reads, in one-letter code: UPF0102 protein YraN (131 aa).

Residues 1–19 are compositionally biased toward polar residues; the sequence is MATVPTRSGSPRQLTTKQT. The disordered stretch occupies residues 1–20; it reads MATVPTRSGSPRQLTTKQTG.

It belongs to the UPF0102 family.

This Shigella boydii serotype 18 (strain CDC 3083-94 / BS512) protein is UPF0102 protein YraN.